A 367-amino-acid polypeptide reads, in one-letter code: MAFNSADINSFRDIWVFCEQREGKLINTDFELISEGRKLADERGSKLVGILLGHEVEEIAKELGGYGADKVIVCDHPELKFYTTDAYAKVLCDVVMEEKPEVILIGATNIGRDLGPRCAARLHTGLTADCTHLDIDMNKYVDFLSTSSTLDISSMTFPMEDTNLKMTRPAFGGHLMATIICPRFRPCMSTVRPGVMKKAEFSQEMAQACQVVTRHVNLSDEDLKTKVINIVKETKKIVDLIGAEIIVSVGRGISKDVQGGIALAEKLADAFGNGVVGGSRAVIDSGWLPADHQVGQTGKTVHPKVYVALGISGAIQHKAGMQDSELIIAVNKDETAPIFDCADYGITGDLFKIVPMMIDAIKEGKNA.

305-333 (VYVALGISGAIQHKAGMQDSELIIAVNKD) provides a ligand contact to FAD.

Heterohexadecamer; tetramer of tetramers. Each tetramer is composed of 2 alpha (AcrC), a beta (AcrA) and a gamma (AcrB) subunit.

The protein resides in the cytoplasm. Part of the ETF-acryloyl-CoA reductase complex involved in the pathway of L-alanine fermentation. The electron transfer flavoprotein (ETF) serves as a specific electron acceptor for acryloyl-CoA reductase. The protein is Acryloyl-CoA reductase electron transfer subunit beta (acrA) of Anaerotignum propionicum (Clostridium propionicum).